Here is a 35-residue protein sequence, read N- to C-terminus: Defensin-B (35 aa).

Intrachain disulfides connect cysteine 4–cysteine 25, cysteine 10–cysteine 33, and cysteine 14–cysteine 35.

It is found in the secreted. Its function is as follows. Has antibacterial activity against M.luteus and E.coli. This Mytilus edulis (Blue mussel) protein is Defensin-B.